A 443-amino-acid chain; its full sequence is Trimethylamine monooxygenase (443 aa).

FAD contacts are provided by Asp37, Gln39, Leu45, and Trp46. NADP(+) is bound by residues Trp70 and Asn72. 2 residues coordinate FAD: Asn72 and Val125. Positions 170, 202, 203, 205, and 226 each coordinate NADP(+). Gln315 and Thr318 together coordinate FAD. NADP(+) is bound at residue Arg409.

It belongs to the FMO family. It depends on FAD as a cofactor.

It carries out the reaction trimethylamine + NADPH + O2 = trimethylamine N-oxide + NADP(+) + H2O. Its function is as follows. Catalyzes the oxidation of trimethylamine (TMA) to produce trimethylamine N-oxide (TMAO). In vitro, has a broad substrate specificity, oxidizing many nitrogen- and sulfur-containing compounds, including dimethylamine (DMA), dimethylsulfide (DMS) and dimethylsulfoxide (DMSO). The sequence is that of Trimethylamine monooxygenase from Pelagibacter ubique (strain HTCC1002).